The primary structure comprises 638 residues: 1-deoxy-D-xylulose-5-phosphate synthase (638 aa).

Thiamine diphosphate-binding positions include His76 and Ala117 to Ser119. Position 148 (Asp148) interacts with Mg(2+). Residues Gly149–Ser150, Asn177, Tyr287, and Glu369 each bind thiamine diphosphate. Asn177 is a binding site for Mg(2+).

It belongs to the transketolase family. DXPS subfamily. In terms of assembly, homodimer. It depends on Mg(2+) as a cofactor. The cofactor is thiamine diphosphate.

The catalysed reaction is D-glyceraldehyde 3-phosphate + pyruvate + H(+) = 1-deoxy-D-xylulose 5-phosphate + CO2. It functions in the pathway metabolic intermediate biosynthesis; 1-deoxy-D-xylulose 5-phosphate biosynthesis; 1-deoxy-D-xylulose 5-phosphate from D-glyceraldehyde 3-phosphate and pyruvate: step 1/1. Catalyzes the acyloin condensation reaction between C atoms 2 and 3 of pyruvate and glyceraldehyde 3-phosphate to yield 1-deoxy-D-xylulose-5-phosphate (DXP). The chain is 1-deoxy-D-xylulose-5-phosphate synthase from Rhodopseudomonas palustris (strain HaA2).